The chain runs to 618 residues: Cell pattern formation-associated protein STU1 (618 aa).

Residues 13-28 show a composition bias toward polar residues; sequence MSAGPTQQPPTVTSYN. Residues 13-105 form a disordered region; sequence MSAGPTQQPP…FDTSGQIAPP (93 aa). The span at 48–59 shows a compositional bias: low complexity; it reads YGGYPYTNGMPS. The segment covering 91–101 has biased composition (polar residues); that stretch reads NQYSGFDTSGQ. One can recognise an HTH APSES-type domain in the interval 110-216; it reads RVTATLWEDE…HNISALLYHP (107 aa). A DNA-binding region (H-T-H motif) is located at residues 144–165; it reads GTKLLNVAGMTRGRRDGILKSE. Disordered regions lie at residues 229–355 and 390–618; these read AERR…YDGS and SEMG…SRRR. 4 stretches are compositionally biased toward polar residues: residues 256-266, 284-298, 305-326, and 336-355; these read MSQNGSQSLSG, TSAS…SDSF, AMSN…TRSM, and GSTL…YDGS. Basic and acidic residues predominate over residues 438–451; the sequence is DHEHDPEYTHDSRT. A compositionally biased stretch (polar residues) spans 452–476; the sequence is YDNSQSQYNYTAPPVSSISSEQAHV. The segment covering 494–512 has biased composition (low complexity); sequence PRSAAAPQAYYQQAYSTSP. Residues 513 to 563 are compositionally biased toward polar residues; the sequence is RSATHQSTSNLYNVMSNDRGSTTNGSANGDVYSQSTDLSNGYATPVTNGNA. Residues 566 to 588 form a nuclear localization domain region; that stretch reads KRGRDDDDDRSSSSGQMDLKRRK.

This sequence belongs to the EFG1/PHD1/stuA family.

The protein resides in the nucleus. Functionally, transcription factor that regulates asexual reproduction. Binds the StuA-response elements (StRE) with the consensus sequence 5'-(A/T)CGCG(T/A)N(A/C)-3' at the promoters of target genes. Required for appressorium-mediated infection of rice leaves due to its involvement in the mobilization of lipids and glycogen. The protein is Cell pattern formation-associated protein STU1 of Pyricularia oryzae (strain 70-15 / ATCC MYA-4617 / FGSC 8958) (Rice blast fungus).